A 388-amino-acid chain; its full sequence is 1-deoxy-D-xylulose 5-phosphate reductoisomerase (388 aa).

The NADPH site is built by threonine 10, glycine 11, serine 12, isoleucine 13, lysine 37, asparagine 38, and asparagine 123. Lysine 124 contributes to the 1-deoxy-D-xylulose 5-phosphate binding site. Glutamate 125 provides a ligand contact to NADPH. Aspartate 149 provides a ligand contact to Mn(2+). Residues serine 150, glutamate 151, serine 175, and histidine 198 each coordinate 1-deoxy-D-xylulose 5-phosphate. Residue glutamate 151 coordinates Mn(2+). An NADPH-binding site is contributed by glycine 204. 4 residues coordinate 1-deoxy-D-xylulose 5-phosphate: serine 211, asparagine 216, lysine 217, and glutamate 220. Position 220 (glutamate 220) interacts with Mn(2+).

This sequence belongs to the DXR family. Mg(2+) serves as cofactor. The cofactor is Mn(2+).

It carries out the reaction 2-C-methyl-D-erythritol 4-phosphate + NADP(+) = 1-deoxy-D-xylulose 5-phosphate + NADPH + H(+). Its pathway is isoprenoid biosynthesis; isopentenyl diphosphate biosynthesis via DXP pathway; isopentenyl diphosphate from 1-deoxy-D-xylulose 5-phosphate: step 1/6. Functionally, catalyzes the NADPH-dependent rearrangement and reduction of 1-deoxy-D-xylulose-5-phosphate (DXP) to 2-C-methyl-D-erythritol 4-phosphate (MEP). In Pelagibacter ubique (strain HTCC1062), this protein is 1-deoxy-D-xylulose 5-phosphate reductoisomerase.